Reading from the N-terminus, the 616-residue chain is Chaperone protein HscA homolog (616 aa).

The protein belongs to the heat shock protein 70 family.

Functionally, chaperone involved in the maturation of iron-sulfur cluster-containing proteins. Has a low intrinsic ATPase activity which is markedly stimulated by HscB. The sequence is that of Chaperone protein HscA homolog from Aliivibrio fischeri (strain MJ11) (Vibrio fischeri).